The following is a 943-amino-acid chain: Calcium-activated chloride channel regulator 2 (943 aa).

The signal sequence occupies residues 1-31; that stretch reads MTQRSIAGPICNLKFVTLLVALSSELPFLGA. The Extracellular portion of the chain corresponds to 32–901; it reads GVQLQDNGYN…SDPVPARDYL (870 aa). The segment at 54–205 is metalloprotease domain; that stretch reads NQNLISNIKE…CSSDITGIFV (152 aa). 2 N-linked (GlcNAc...) asparagine glycosylation sites follow: Asn74 and Asn150. Position 164 (His164) interacts with Zn(2+). The active site involves Glu165. Residues His168 and Asp175 each contribute to the Zn(2+) site. Asn231 is a glycosylation site (N-linked (GlcNAc...) asparagine). The VWFA domain occupies 311-483; the sequence is VVCLVLDVSS…NSMIDAFSRI (173 aa). 2 N-linked (GlcNAc...) asparagine glycosylation sites follow: Asn522 and Asn822. The helical transmembrane segment at 902 to 922 threads the bilayer; sequence ILKGVLTAMGLIGIICLIIVV. At 923-943 the chain is on the cytoplasmic side; that stretch reads THHTLSRKKRADKKENGTKLL.

The protein belongs to the CLCR family. Post-translationally, the 141 kDa mature form is autoproteolytically cleaved by the metalloprotease domain, producing a 109 kDa form and a 35 kDa form. The cleavage is necessary for calcium-activated chloride channel (CaCC) activation activity. N-glycosylated. Expressed in cornea, skin, vagina, esophagus, and larynx (at protein level). Expressed in trachea and mammary gland. Weakly expressed in testis and kidney. Highly expressed in corneal epithelium, colon and trachea. Moderately expressed in brain, urogenital organs, bladder, uterus and prostate. Highly expressed in tissues containing stratified epithelium including cornea, esophagus, larynx, skin and vagina than those tissues which contain only epithelial monolayers. Expressed in normal breast epithelium but not in breast cancer. Highly expressed during epithelial stratification. Expressed in endothelial cells of lung. Expressed selectively in endothelia of small pulmonary arteries, arterioles, and subpleural and interlobular venules.

Its subcellular location is the cell membrane. The protein resides in the basal cell membrane. It is found in the cell junction. The protein localises to the secreted. Functionally, plays a role in modulating chloride current across the plasma membrane in a calcium-dependent manner, and cell adhesion. Involved in basal cell adhesion and/or stratification of squamous epithelia. May act as a tumor suppressor in breast and colorectal cancer. Plays a key role for cell adhesion in the beginning stages of lung metastasis via the binding to ITGB4. In Homo sapiens (Human), this protein is Calcium-activated chloride channel regulator 2 (CLCA2).